We begin with the raw amino-acid sequence, 245 residues long: Biosynthetic peptidoglycan transglycosylase (245 aa).

Residues 29–49 traverse the membrane as a helical segment; the sequence is LLVAFLILSLVLVATVSVINP.

Belongs to the glycosyltransferase 51 family.

Its subcellular location is the cell inner membrane. It catalyses the reaction [GlcNAc-(1-&gt;4)-Mur2Ac(oyl-L-Ala-gamma-D-Glu-L-Lys-D-Ala-D-Ala)](n)-di-trans,octa-cis-undecaprenyl diphosphate + beta-D-GlcNAc-(1-&gt;4)-Mur2Ac(oyl-L-Ala-gamma-D-Glu-L-Lys-D-Ala-D-Ala)-di-trans,octa-cis-undecaprenyl diphosphate = [GlcNAc-(1-&gt;4)-Mur2Ac(oyl-L-Ala-gamma-D-Glu-L-Lys-D-Ala-D-Ala)](n+1)-di-trans,octa-cis-undecaprenyl diphosphate + di-trans,octa-cis-undecaprenyl diphosphate + H(+). Its pathway is cell wall biogenesis; peptidoglycan biosynthesis. Functionally, peptidoglycan polymerase that catalyzes glycan chain elongation from lipid-linked precursors. The protein is Biosynthetic peptidoglycan transglycosylase of Shewanella amazonensis (strain ATCC BAA-1098 / SB2B).